Reading from the N-terminus, the 243-residue chain is tRNA (guanine-N(1)-)-methyltransferase (243 aa).

S-adenosyl-L-methionine is bound by residues glycine 123 and leucine 143 to methionine 148.

This sequence belongs to the RNA methyltransferase TrmD family. Homodimer.

It is found in the cytoplasm. It catalyses the reaction guanosine(37) in tRNA + S-adenosyl-L-methionine = N(1)-methylguanosine(37) in tRNA + S-adenosyl-L-homocysteine + H(+). Its function is as follows. Specifically methylates guanosine-37 in various tRNAs. This Ruegeria pomeroyi (strain ATCC 700808 / DSM 15171 / DSS-3) (Silicibacter pomeroyi) protein is tRNA (guanine-N(1)-)-methyltransferase.